A 301-amino-acid polypeptide reads, in one-letter code: Nucleotide-binding protein Noca_2527 (301 aa).

26 to 33 (GMTGAGRS) contacts ATP. Position 77 to 80 (77 to 80 (DVRS)) interacts with GTP.

Belongs to the RapZ-like family.

Its function is as follows. Displays ATPase and GTPase activities. This chain is Nucleotide-binding protein Noca_2527, found in Nocardioides sp. (strain ATCC BAA-499 / JS614).